The chain runs to 476 residues: Glutamate--tRNA ligase (476 aa).

Positions 9–19 (PSPTGLFHIGT) match the 'HIGH' region motif. The short motif at 248 to 252 (KLSKR) is the 'KMSKS' region element. An ATP-binding site is contributed by lysine 251.

The protein belongs to the class-I aminoacyl-tRNA synthetase family. Glutamate--tRNA ligase type 1 subfamily. As to quaternary structure, monomer.

The protein resides in the cytoplasm. The catalysed reaction is tRNA(Glu) + L-glutamate + ATP = L-glutamyl-tRNA(Glu) + AMP + diphosphate. Functionally, catalyzes the attachment of glutamate to tRNA(Glu) in a two-step reaction: glutamate is first activated by ATP to form Glu-AMP and then transferred to the acceptor end of tRNA(Glu). The polypeptide is Glutamate--tRNA ligase (Prochlorococcus marinus (strain AS9601)).